Here is an 87-residue protein sequence, read N- to C-terminus: Small ribosomal subunit protein bS20 (87 aa).

Belongs to the bacterial ribosomal protein bS20 family.

In terms of biological role, binds directly to 16S ribosomal RNA. In Mycoplasma pneumoniae (strain ATCC 29342 / M129 / Subtype 1) (Mycoplasmoides pneumoniae), this protein is Small ribosomal subunit protein bS20.